Here is a 562-residue protein sequence, read N- to C-terminus: Dihydroxy-acid dehydratase (562 aa).

A Mg(2+)-binding site is contributed by Asp-80. A [2Fe-2S] cluster-binding site is contributed by Cys-121. Residues Asp-122 and Lys-123 each contribute to the Mg(2+) site. Residue Lys-123 is modified to N6-carboxylysine. A [2Fe-2S] cluster-binding site is contributed by Cys-194. Glu-446 is a Mg(2+) binding site. Residue Ser-472 is the Proton acceptor of the active site.

It belongs to the IlvD/Edd family. Homodimer. [2Fe-2S] cluster serves as cofactor. Requires Mg(2+) as cofactor.

The catalysed reaction is (2R)-2,3-dihydroxy-3-methylbutanoate = 3-methyl-2-oxobutanoate + H2O. The enzyme catalyses (2R,3R)-2,3-dihydroxy-3-methylpentanoate = (S)-3-methyl-2-oxopentanoate + H2O. The protein operates within amino-acid biosynthesis; L-isoleucine biosynthesis; L-isoleucine from 2-oxobutanoate: step 3/4. It functions in the pathway amino-acid biosynthesis; L-valine biosynthesis; L-valine from pyruvate: step 3/4. In terms of biological role, functions in the biosynthesis of branched-chain amino acids. Catalyzes the dehydration of (2R,3R)-2,3-dihydroxy-3-methylpentanoate (2,3-dihydroxy-3-methylvalerate) into 2-oxo-3-methylpentanoate (2-oxo-3-methylvalerate) and of (2R)-2,3-dihydroxy-3-methylbutanoate (2,3-dihydroxyisovalerate) into 2-oxo-3-methylbutanoate (2-oxoisovalerate), the penultimate precursor to L-isoleucine and L-valine, respectively. In Staphylococcus aureus (strain COL), this protein is Dihydroxy-acid dehydratase.